We begin with the raw amino-acid sequence, 410 residues long: Kelch domain-containing protein 10 (410 aa).

Residues 1–40 are disordered; that stretch reads MSAAQGWDRNRRRGGGAAGGASGVSGAGAAGGGRGTGQLN. At Arg-13 the chain carries Omega-N-methylarginine. Positions 15 to 36 are enriched in gly residues; the sequence is GGAAGGASGVSGAGAAGGGRGT. 6 Kelch repeats span residues 87–154, 155–198, 199–260, 261–319, 320–364, and 365–403; these read GPDN…DVHV, CNVK…GYIY, STDL…IHAY, NLET…LQTF, QWVK…GSLF, and KIWLVVPSLLELAWEKLLAAFPNLANLSRTQLLHLGLTQ. Residues 369–410 form an interaction with CUL2 region; sequence VVPSLLELAWEKLLAAFPNLANLSRTQLLHLGLTQELIERLK.

It belongs to the KLHDC10 family. As to quaternary structure, component of a CRL2 E3 ubiquitin-protein ligase complex, also named ECS (Elongin BC-CUL2/5-SOCS-box protein) complex, composed of CUL2, Elongin BC (ELOB and ELOC), RBX1 and substrate-specific adapter KLHDC10. Interacts (via the 6 Kelch repeats) with PPP5C.

Its subcellular location is the nucleus. The protein localises to the cytoplasm. It functions in the pathway protein modification; protein ubiquitination. Functionally, substrate-recognition component of a Cul2-RING (CRL2) E3 ubiquitin-protein ligase complex of the DesCEND (destruction via C-end degrons) pathway, which recognizes a C-degron located at the extreme C-terminus of target proteins, leading to their ubiquitination and degradation. The C-degron recognized by the DesCEND pathway is usually a motif of less than ten residues and can be present in full-length proteins, truncated proteins or proteolytically cleaved forms. The CRL2(KLHDC10) complex specifically recognizes proteins with a proline-glycine (Pro-Gly) or an alanine tail (CAT tail) at the C-terminus, leading to their ubiquitination and degradation. The CRL2(KLHDC10) complex is involved in the ribosome-associated quality control (RQC) pathway, which mediates the extraction of incompletely synthesized nascent chains from stalled ribosomes: CRL2(KLHDC10) acts downstream of NEMF and recognizes CAT tails associated with stalled nascent chains, leading to their ubiquitination and degradation. Participates in the oxidative stress-induced cell death through MAP3K5 activation. Inhibits PPP5C phosphatase activity on MAP3K5. Acts as a regulator of necroptosis. The polypeptide is Kelch domain-containing protein 10 (Rattus norvegicus (Rat)).